The following is a 187-amino-acid chain: Large ribosomal subunit protein uL5 (187 aa).

It belongs to the universal ribosomal protein uL5 family. As to quaternary structure, part of the 50S ribosomal subunit; part of the 5S rRNA/L5/L18/L25 subcomplex. Contacts the 5S rRNA and the P site tRNA. Forms a bridge to the 30S subunit in the 70S ribosome.

Its function is as follows. This is one of the proteins that bind and probably mediate the attachment of the 5S RNA into the large ribosomal subunit, where it forms part of the central protuberance. In the 70S ribosome it contacts protein S13 of the 30S subunit (bridge B1b), connecting the 2 subunits; this bridge is implicated in subunit movement. Contacts the P site tRNA; the 5S rRNA and some of its associated proteins might help stabilize positioning of ribosome-bound tRNAs. In Nocardia farcinica (strain IFM 10152), this protein is Large ribosomal subunit protein uL5.